A 431-amino-acid chain; its full sequence is Glutamate-1-semialdehyde 2,1-aminomutase (431 aa).

Position 267 is an N6-(pyridoxal phosphate)lysine (Lys267).

Belongs to the class-III pyridoxal-phosphate-dependent aminotransferase family. HemL subfamily. Homodimer. It depends on pyridoxal 5'-phosphate as a cofactor.

The protein resides in the cytoplasm. The enzyme catalyses (S)-4-amino-5-oxopentanoate = 5-aminolevulinate. Its pathway is porphyrin-containing compound metabolism; protoporphyrin-IX biosynthesis; 5-aminolevulinate from L-glutamyl-tRNA(Glu): step 2/2. This Myxococcus xanthus (strain DK1622) protein is Glutamate-1-semialdehyde 2,1-aminomutase.